The following is a 395-amino-acid chain: Zinc finger protein 385D (395 aa).

Matrin-type zinc fingers lie at residues 80 to 110, 204 to 234, and 267 to 297; these read ISCN…KLKA, LYCS…MLEA, and FHCE…RASG. The tract at residues 282-308 is disordered; the sequence is LKQHISSRRHKDRASGKPPKPKYSPYN.

The protein resides in the nucleus. The polypeptide is Zinc finger protein 385D (Znf385d) (Rattus norvegicus (Rat)).